The following is a 1334-amino-acid chain: Putative transmembrane protein ORF1334 (1334 aa).

A helical transmembrane segment spans residues Val53–His73. A disordered region spans residues Leu1107–Ser1135. The segment covering Ser1110–Ser1135 has biased composition (low complexity). A run of 3 helical transmembrane segments spans residues Ala1256 to Ile1276, Ile1292 to Val1312, and Tyr1313 to Gln1333.

The protein localises to the host membrane. The chain is Putative transmembrane protein ORF1334 from Acidianus two-tailed virus (ATV).